Reading from the N-terminus, the 137-residue chain is Large ribosomal subunit protein uL16 (137 aa).

This sequence belongs to the universal ribosomal protein uL16 family. Part of the 50S ribosomal subunit.

Its function is as follows. Binds 23S rRNA and is also seen to make contacts with the A and possibly P site tRNAs. This chain is Large ribosomal subunit protein uL16, found in Lactococcus lactis subsp. lactis (strain IL1403) (Streptococcus lactis).